A 63-amino-acid chain; its full sequence is ATP synthase membrane subunit K, mitochondrial (63 aa).

Residues 15–37 (TMRGRANVAKATWASLGLVYVLV) form a helical membrane-spanning segment.

In terms of assembly, F-type ATPases have 2 components, CF(1) - the catalytic core - and CF(0) - the membrane proton channel. CF(1) has five subunits: alpha(3), beta(3), gamma(1), delta(1), epsilon(1). CF(0) has three main subunits: a, b and c. The ATP synthase complex/complex V exists as a monomeric and a dimeric supercomplex that helps shape mitochondrial cristae to optimize proton flow.

It localises to the mitochondrion membrane. Its function is as follows. Mitochondrial membrane ATP synthase (F(1)F(0) ATP synthase or Complex V) produces ATP from ADP in the presence of a proton gradient across the membrane which is generated by electron transport complexes of the respiratory chain. F-type ATPases consist of two structural domains, F(1) - containing the extramembraneous catalytic core and F(0) - containing the membrane proton channel, linked together by a central stalk and a peripheral stalk. During catalysis, ATP synthesis in the catalytic domain of F(1) is coupled via a rotary mechanism of the central stalk subunits to proton translocation. ATP5MK is a minor subunit of the mitochondrial membrane ATP synthase required for dimerization of the ATP synthase complex and as such regulates ATP synthesis in the mitochondria. The polypeptide is ATP synthase membrane subunit K, mitochondrial (Drosophila melanogaster (Fruit fly)).